Here is a 260-residue protein sequence, read N- to C-terminus: 14-3-3-like protein (260 aa).

A disordered region spans residues 240 to 260 (DMQDDGGDEIKEAAPKPDEQY). A compositionally biased stretch (basic and acidic residues) spans 247–260 (DEIKEAAPKPDEQY).

Belongs to the 14-3-3 family.

This Oenothera elata subsp. hookeri (Hooker's evening primrose) protein is 14-3-3-like protein.